We begin with the raw amino-acid sequence, 510 residues long: NAD(P)H-quinone oxidoreductase subunit 2 B, chloroplastic (510 aa).

The next 13 helical transmembrane spans lie at 24–44, 57–77, 99–119, 124–144, 150–170, 183–203, 229–249, 295–315, 323–343, 354–374, 395–415, 418–438, and 484–504; these read LLLF…GLIL, IPWL…ALLF, IFQF…VEYI, MAIT…MFLC, ITIF…SGYT, YLLM…WLYG, ISIA…PAPF, WHLL…LIAI, MLAY…IVGD, YMLF…LFGL, ALSS…AGFF, LHLF…IGLL, and MIVC…IIAI.

The protein belongs to the complex I subunit 2 family. As to quaternary structure, NDH is composed of at least 16 different subunits, 5 of which are encoded in the nucleus.

The protein resides in the plastid. It localises to the chloroplast thylakoid membrane. It catalyses the reaction a plastoquinone + NADH + (n+1) H(+)(in) = a plastoquinol + NAD(+) + n H(+)(out). The catalysed reaction is a plastoquinone + NADPH + (n+1) H(+)(in) = a plastoquinol + NADP(+) + n H(+)(out). Functionally, NDH shuttles electrons from NAD(P)H:plastoquinone, via FMN and iron-sulfur (Fe-S) centers, to quinones in the photosynthetic chain and possibly in a chloroplast respiratory chain. The immediate electron acceptor for the enzyme in this species is believed to be plastoquinone. Couples the redox reaction to proton translocation, and thus conserves the redox energy in a proton gradient. The chain is NAD(P)H-quinone oxidoreductase subunit 2 B, chloroplastic from Drimys granadensis.